We begin with the raw amino-acid sequence, 206 residues long: Peptidyl-tRNA hydrolase (206 aa).

Y19 contacts tRNA. H24 (proton acceptor) is an active-site residue. F70, N72, and N118 together coordinate tRNA.

This sequence belongs to the PTH family. Monomer.

The protein localises to the cytoplasm. It catalyses the reaction an N-acyl-L-alpha-aminoacyl-tRNA + H2O = an N-acyl-L-amino acid + a tRNA + H(+). Functionally, hydrolyzes ribosome-free peptidyl-tRNAs (with 1 or more amino acids incorporated), which drop off the ribosome during protein synthesis, or as a result of ribosome stalling. In terms of biological role, catalyzes the release of premature peptidyl moieties from peptidyl-tRNA molecules trapped in stalled 50S ribosomal subunits, and thus maintains levels of free tRNAs and 50S ribosomes. The polypeptide is Peptidyl-tRNA hydrolase (Synechococcus sp. (strain CC9902)).